The following is a 443-amino-acid chain: Ribosomal protein uS12 methylthiotransferase RimO (443 aa).

Residues methionine 1 to alanine 116 form the MTTase N-terminal domain. Residues cysteine 10, cysteine 45, cysteine 79, cysteine 154, cysteine 158, and cysteine 161 each coordinate [4Fe-4S] cluster. In terms of domain architecture, Radical SAM core spans serine 140 to glutamate 370. One can recognise a TRAM domain in the interval lysine 373–serine 441.

It belongs to the methylthiotransferase family. RimO subfamily. Requires [4Fe-4S] cluster as cofactor.

It localises to the cytoplasm. The enzyme catalyses L-aspartate(89)-[ribosomal protein uS12]-hydrogen + (sulfur carrier)-SH + AH2 + 2 S-adenosyl-L-methionine = 3-methylsulfanyl-L-aspartate(89)-[ribosomal protein uS12]-hydrogen + (sulfur carrier)-H + 5'-deoxyadenosine + L-methionine + A + S-adenosyl-L-homocysteine + 2 H(+). Functionally, catalyzes the methylthiolation of an aspartic acid residue of ribosomal protein uS12. The protein is Ribosomal protein uS12 methylthiotransferase RimO of Desulfotalea psychrophila (strain LSv54 / DSM 12343).